A 251-amino-acid chain; its full sequence is Probable ATP-dependent transporter ycf16 (251 aa).

The region spanning 7 to 251 (LNIKNLDVTI…EKYGYDYLNK (245 aa)) is the ABC transporter domain. 39-46 (GKNGSGKS) serves as a coordination point for ATP.

Belongs to the ABC transporter superfamily. Ycf16 family.

It is found in the plastid. The protein resides in the chloroplast. The sequence is that of Probable ATP-dependent transporter ycf16 (ycf16) from Antithamnion sp. (Red alga).